The sequence spans 856 residues: MAP kinase phosphatase with leucine-rich repeats protein 3 (856 aa).

A compositionally biased stretch (low complexity) spans 1–10 (MGNSHSSENG). Disordered regions lie at residues 1–24 (MGNSHSSENGGNSGSGGGSGGGGS), 84–195 (VKKN…SSVL), and 214–326 (DDNS…NAKD). Glycine 2 carries N-myristoyl glycine lipidation. The segment covering 11-24 (GNSGSGGGSGGGGS) has biased composition (gly residues). Residues 90–142 (NSSNNNSNNNSNNNNNNNTLNNSTIITTTTTTTTTSTPTTTIMITPPQQQQQQ) are compositionally biased toward low complexity. Polar residues predominate over residues 155-165 (ESSTPNEQQIR). Composition is skewed to low complexity over residues 178-195 (ESSFLKSSPVPSPSSSVL) and 224-243 (QQQQQQQNEDSKQSSQQQTQ). Polar residues-rich tracts occupy residues 254–265 (IVNNKSSSTTNI) and 272–281 (AQTSRSTSIP). Residues 306-323 (NSLSSSNIITPNNTTNTN) are compositionally biased toward low complexity. LRR repeat units follow at residues 344–365 (KIFSLDLSINRLENITNDILSI), 370–391 (EIQELTLSTNFFQIIPDLQLVK), 392–413 (SLTTVNLTRNKLSKLQTSVFIE), 416–437 (SLTSLILDRNFISSIPDDIDQI), 439–461 (NLKYLSIKHNALEYLPNSLSNLS), 462–484 (QLISLDLSQNKLKTLPPNFDDLI), 485–506 (NLRMVWLSYNQITSLPSMRKLV), and 507–528 (NLVTFDISSNKLLSLPKDFAYL). The interval 554–577 (NINSNNNDSNNSNNNNNNNNDNNN) is disordered. One can recognise a Tyrosine-protein phosphatase domain in the interval 632 to 773 (IPSEIIPGIF…LLKYEAKLFC (142 aa)). Catalysis depends on cysteine 717, which acts as the Phosphocysteine intermediate. Residues 810 to 856 (INNSSNSNNNNSTDNSNNSSTSTTPNLSSLSSDSSSSASLSKLSISK) form a disordered region.

This sequence belongs to the protein-tyrosine phosphatase family. Non-receptor class dual specificity subfamily.

It carries out the reaction O-phospho-L-tyrosyl-[protein] + H2O = L-tyrosyl-[protein] + phosphate. The catalysed reaction is O-phospho-L-seryl-[protein] + H2O = L-seryl-[protein] + phosphate. It catalyses the reaction O-phospho-L-threonyl-[protein] + H2O = L-threonyl-[protein] + phosphate. In terms of biological role, probable phosphatase with dual specificity toward Ser/Thr and Tyr-containing proteins. This Dictyostelium discoideum (Social amoeba) protein is MAP kinase phosphatase with leucine-rich repeats protein 3 (mpl3).